Here is a 412-residue protein sequence, read N- to C-terminus: Transforming growth factor beta-3 proprotein (412 aa).

The N-terminal stretch at 1 to 23 (MKMHLQRALVVLALLNLATVSLS) is a signal peptide. N-linked (GlcNAc...) asparagine glycosylation is found at Asn74, Asn135, and Asn142. The Cell attachment site motif lies at 261-263 (RGD). At Gln293 the chain carries N5-methylglutamine. Cystine bridges form between Cys307–Cys316, Cys315–Cys378, Cys344–Cys409, and Cys348–Cys411.

Belongs to the TGF-beta family. As to quaternary structure, interacts with ASPN. Latency-associated peptide: Homodimer; disulfide-linked. Latency-associated peptide: Interacts with Transforming growth factor beta-3 (TGF-beta-3) chain; interaction is non-covalent and maintains (TGF-beta-3) in a latent state. Latency-associated peptide: Interacts with LRRC32/GARP; leading to regulate activation of TGF-beta-3 and promote epithelial fusion during palate development. Latency-associated peptide: Interacts (via cell attachment site) with integrins, leading to release of the active TGF-beta-3. Transforming growth factor beta-3: Homodimer; disulfide-linked. Transforming growth factor beta-3: Interacts with TGF-beta receptors (TGFBR1 and TGFBR2), leading to signal transduction. Post-translationally, transforming growth factor beta-3 proprotein: The precursor proprotein is cleaved in the Golgi apparatus to form Transforming growth factor beta-3 (TGF-beta-3) and Latency-associated peptide (LAP) chains, which remain non-covalently linked, rendering TGF-beta-3 inactive. In terms of processing, methylated at Gln-293 by N6AMT1. In terms of tissue distribution, expressed in cardiomyocytes.

Its subcellular location is the secreted. It is found in the extracellular space. The protein resides in the extracellular matrix. In terms of biological role, transforming growth factor beta-3 proprotein: Precursor of the Latency-associated peptide (LAP) and Transforming growth factor beta-3 (TGF-beta-3) chains, which constitute the regulatory and active subunit of TGF-beta-3, respectively. Its function is as follows. Required to maintain the Transforming growth factor beta-3 (TGF-beta-3) chain in a latent state during storage in extracellular matrix. Associates non-covalently with TGF-beta-3 and regulates its activation via interaction with 'milieu molecules', such as LTBP1 and LRRC32/GARP, that control activation of TGF-beta-3. Interaction with integrins results in distortion of the Latency-associated peptide chain and subsequent release of the active TGF-beta-3. Functionally, transforming growth factor beta-3: Multifunctional protein that regulates embryogenesis and cell differentiation and is required in various processes such as secondary palate development. Activation into mature form follows different steps: following cleavage of the proprotein in the Golgi apparatus, Latency-associated peptide (LAP) and Transforming growth factor beta-3 (TGF-beta-3) chains remain non-covalently linked rendering TGF-beta-3 inactive during storage in extracellular matrix. At the same time, LAP chain interacts with 'milieu molecules', such as LTBP1 and LRRC32/GARP that control activation of TGF-beta-3 and maintain it in a latent state during storage in extracellular milieus. TGF-beta-3 is released from LAP by integrins: integrin-binding results in distortion of the LAP chain and subsequent release of the active TGF-beta-3. Once activated following release of LAP, TGF-beta-3 acts by binding to TGF-beta receptors (TGFBR1 and TGFBR2), which transduce signal. The polypeptide is Transforming growth factor beta-3 proprotein (Tgfb3) (Rattus norvegicus (Rat)).